Here is a 254-residue protein sequence, read N- to C-terminus: Coproheme decarboxylase (254 aa).

Residues R136, 150 to 154, H177, Q190, and S228 each bind Fe-coproporphyrin III; that span reads YPMDK. The active site involves Y150.

The protein belongs to the ChdC family. Type 1 subfamily. Requires Fe-coproporphyrin III as cofactor.

It catalyses the reaction Fe-coproporphyrin III + 2 H2O2 + 2 H(+) = heme b + 2 CO2 + 4 H2O. The enzyme catalyses Fe-coproporphyrin III + H2O2 + H(+) = harderoheme III + CO2 + 2 H2O. The catalysed reaction is harderoheme III + H2O2 + H(+) = heme b + CO2 + 2 H2O. It participates in porphyrin-containing compound metabolism; protoheme biosynthesis. Its function is as follows. Involved in coproporphyrin-dependent heme b biosynthesis. Catalyzes the decarboxylation of Fe-coproporphyrin III (coproheme) to heme b (protoheme IX), the last step of the pathway. The reaction occurs in a stepwise manner with a three-propionate harderoheme intermediate. This Bacillus subtilis (strain 168) protein is Coproheme decarboxylase.